The chain runs to 353 residues: uncharacterized protein (353 aa).

The N-terminal stretch at 1 to 28 (MHLTIMRRFAVLLLLAIFLGGCSGSNGA) is a signal peptide.

This is an uncharacterized protein from Archaeoglobus fulgidus (strain ATCC 49558 / DSM 4304 / JCM 9628 / NBRC 100126 / VC-16).